The sequence spans 395 residues: Teichoic acid D-alanyltransferase (395 aa).

At 1–6 (MTPYSS) the chain is on the extracellular side. The chain crosses the membrane as a helical span at residues 7 to 26 (FLFFILLGILLLPTIILGLN). The Cytoplasmic segment spans residues 27–30 (GKRF). Residues 31-46 (QAYNMFISIIILALIF) form a helical membrane-spanning segment. Topologically, residues 47–50 (SHDL) are extracellular. A helical transmembrane segment spans residues 51–76 (HGVIALCLFTIWQVLLISGYLAYRQK). The Cytoplasmic portion of the chain corresponds to 77–79 (ANS). Residues 80–104 (GFVFCGAVIASILPLFLSKIWPFLS) traverse the membrane as a helical segment. At 105–120 (HPQPHHPPHNLISFLG) the chain is on the extracellular side. Residues 121-137 (ISYLTFKGVQLIMEARD) traverse the membrane as a helical segment. At 138–145 (GLLKEQLP) the chain is on the cytoplasmic side. An intramembrane segment occupies 146–175 (LHRLLYFILFFPTISSGPIDRYRRFVKDEQ). The Cytoplasmic segment spans residues 176–179 (KAWT). A helical membrane pass occupies residues 180–223 (KEEYADLLYTGIHKIFIGFLYKFIIGYAINTYFIMNLPAITHNK). Residue Ile-224 is a topological domain, extracellular. The helical transmembrane segment at 225–256 (LGNLLYMYGYSMYLFFDFAGYTMFAVGVSYIM) threads the bilayer. Topologically, residues 257 to 266 (GIKSPENFNK) are cytoplasmic. An intramembrane segment occupies 267 to 303 (PFISKNIKDFWNRWHMSLSFWFRDYVFMRFVFWMTKK). Residues 304-308 (KWIKN) are Cytoplasmic-facing. A helical membrane pass occupies residues 309–328 (RMAVSNIGYFLLFMLMGVWH). His-328 is a catalytic residue. Topologically, residues 329–333 (GLAPQ) are extracellular. A helical membrane pass occupies residues 334-351 (YIIYGLYHAVLMTCYNFF). The Cytoplasmic portion of the chain corresponds to 352-364 (EKWNKKYKWLPSN). A helical membrane pass occupies residues 365–387 (RWTTILAIVITFHFVCFGFYIFS). The Extracellular segment spans residues 388 to 395 (GKPFHHHH).

This sequence belongs to the membrane-bound acyltransferase family.

It localises to the cell membrane. It functions in the pathway cell wall biogenesis; lipoteichoic acid biosynthesis. In terms of biological role, O-acyltransferase that catalyzes D-alanylation of both teichoic acid and lipoteichoic acid (LTA). D-alanylation of LTA plays an important role in modulating the properties of the cell wall in Gram-positive bacteria, influencing the net charge of the cell wall. Catalyzes D-alanylation from DltC carrier protein. This is Teichoic acid D-alanyltransferase from Bacillus subtilis (strain 168).